The chain runs to 316 residues: Biotin synthase (316 aa).

Residues 39–263 (NAIQCSTLLS…LFPKAYVRLS (225 aa)) enclose the Radical SAM core domain. [4Fe-4S] cluster is bound by residues C54, C58, and C61. [2Fe-2S] cluster-binding residues include C98, C129, C189, and R261.

This sequence belongs to the radical SAM superfamily. Biotin synthase family. Homodimer. The cofactor is [4Fe-4S] cluster. Requires [2Fe-2S] cluster as cofactor.

The enzyme catalyses (4R,5S)-dethiobiotin + (sulfur carrier)-SH + 2 reduced [2Fe-2S]-[ferredoxin] + 2 S-adenosyl-L-methionine = (sulfur carrier)-H + biotin + 2 5'-deoxyadenosine + 2 L-methionine + 2 oxidized [2Fe-2S]-[ferredoxin]. The protein operates within cofactor biosynthesis; biotin biosynthesis; biotin from 7,8-diaminononanoate: step 2/2. Catalyzes the conversion of dethiobiotin (DTB) to biotin by the insertion of a sulfur atom into dethiobiotin via a radical-based mechanism. The sequence is that of Biotin synthase from Acidithiobacillus ferrooxidans (strain ATCC 23270 / DSM 14882 / CIP 104768 / NCIMB 8455) (Ferrobacillus ferrooxidans (strain ATCC 23270)).